A 248-amino-acid polypeptide reads, in one-letter code: Leucyl/phenylalanyl-tRNA--protein transferase (248 aa).

This sequence belongs to the L/F-transferase family.

The protein resides in the cytoplasm. The catalysed reaction is N-terminal L-lysyl-[protein] + L-leucyl-tRNA(Leu) = N-terminal L-leucyl-L-lysyl-[protein] + tRNA(Leu) + H(+). The enzyme catalyses N-terminal L-arginyl-[protein] + L-leucyl-tRNA(Leu) = N-terminal L-leucyl-L-arginyl-[protein] + tRNA(Leu) + H(+). It catalyses the reaction L-phenylalanyl-tRNA(Phe) + an N-terminal L-alpha-aminoacyl-[protein] = an N-terminal L-phenylalanyl-L-alpha-aminoacyl-[protein] + tRNA(Phe). In terms of biological role, functions in the N-end rule pathway of protein degradation where it conjugates Leu, Phe and, less efficiently, Met from aminoacyl-tRNAs to the N-termini of proteins containing an N-terminal arginine or lysine. The sequence is that of Leucyl/phenylalanyl-tRNA--protein transferase from Oleidesulfovibrio alaskensis (strain ATCC BAA-1058 / DSM 17464 / G20) (Desulfovibrio alaskensis).